The following is a 2227-amino-acid chain: MNMSKQGIFQTVGSGLDHILSLADIEEEQMIQSVDRTAVTGASYFTSVDQSSVHTAEVGSHQIEPLKTSVDKPGSKKTQGEKFFLIHSADWLTTHALFHEVAKLDVVKLLYNEQFAVQGLLRYHTYARFGIEIQVQINPTPFQQGGLICAMVPGDQSYGSIASLTVYPHGLLNCNINNVVRIKVPFIYTRGAYHFKDPQYPVWELTIRVWSELNIGTGTSAYTSLNVLARFTDLELHGLTPLSTQMMRNEFRVSTTENVVNLSNYEDARAKMSFALDPEDWKSDPSQGGGIKITHFTTWTSIPTLAAQFPFNASDSVGQQIKVIPVDPYFFQMTNTNPDQKCITALASICQMFCFWRGDLVFDFQVFPTKYHSGRLLFCFVPGNELIDVTGITLKQATTAPCAVMDITGVQSTLRFRVPWISDTPYRVNRYTKSAHQKGEYTAIGKLIVYCYNRLTSPSNVASHVRVNVYLSAINLECFAPLYHAMDVTTQVGDDSGGFSTTVSTEQNVPDPQVGITTMRDLKGKANRGKMDVSGVQAPVGAITTIEDPVLAKKVPETFPELKPGESRHTSDHMSIYKFMGRSHFLCTFTFNSNNKEYTFPITLSSTSNPPHGLPSTLRWFFNLFQLYRGPLDLTIIITGATDVDGMAWFTPVGLAVDTPWVEKESALSIDYKTALGAVRFNTRRTGNIQIRLPWYSYLYAVSGALDGLGDKTDSTFGLVSIQIANYNHSDEYLSFSCYLSVTEQSEFYFPRAPLNSNAMLSTESMMSRIAAGDLESSVDDPRSEEDRRFESHIECRKPYKELRLEVGKQRLKYAQEELSNEVLPPPRKMKGLFSQAKISLFYTEEHEIMKFSWRGVTADTRALRRFGFSMAAGRSVWTLEMDAGVLTGRLVRLNDEKWTEMKDDKIVSLIEKFTSNKYWSKVSFPHGMLDLEEIAANSTDFPNMSETDLCFLLHWLNPKKINLADRMLGLSGVQEIKEQGVGLIAECRTFLDSIAGTLKSMMFGFHHSVTVEIINTVLCFVKSGILLYVIQQLNQDEHSHIIGLLRVMNYADIGCSVISCGKVFSKMLETVFNWQMDSRMMELRTQSFSNWLRDICSGITIFKSFKDAIYWLYTKLKDFYEVNYGKKKDILNILKDNQQKIEKAIEEADNFCILQIQDVEKFDQYQKGVDLIQKLRTVHSMAQVDPNLGVHLSPLRDCIARVHQKLKNLGSINQAMVTRCEPVVCYLYGKRGGGKSLTSIALATKICKHYGVEPEKNIYTKPVASDYWDGYSGQLVCIIDDIGQNTTDEDWSDFCQLVSGCPMRLNMASLEEKGRHFSSPFIIATSNWSNPSPKTVYVKEAIDRRLHFKVEVKPASFFKNPHNDMLNVNLAKTNDAIKDMSCVDLIMDGHNISLMDLLSSLVMTVEIRKQNMSEFMELWSQGISDDDNDSAVAEFFQSFPSGEPSNSKLSSFFQSVTNHKWVAVGAAVGILGVLVGGWFVYKHFSRKEEEPIPAEGVYHGVTKPKQVIKLDADPVESQSTLEIAGLVRKNLVQFGVGEKNGCVRWVMNALGVKDDWLLVPSHAYKFEKDYEMMEFYFNRGGTYYSISAGNVVIQSLDVGFQDVVLMKVPTIPKFRDITQHFIKKGDVPRALNRLATLVTTVNGTPMLISEGPLKMEEKATYVHKKNDGTTVDLTVDQAWRGKGEGLPGMCGGALVSSNQSIQNAILGIHVAGGNSILVAKLVTQEMFQNIDKKIESQRIMKVEFTQCSMNVVSKTLFRKSPIHHHIDKTMINFPAVMPFSKAEVDPMAVMLSKYSLPIVEEPEDYKEASIFYQNKIVGKTQLVDDFLDLDMAITGAPGIDAINMDSSPGFPYVQEKLTKRDLIWLDENGLLLGVHPRLAQRILFNTVMMENCSDLDVVFTTCPKDELRPLEKVLESKTRAIDACPLDYTILCRMYWGPAISYFHLNPGFHTGVAIGIDPDRQWDELFKTMIRFGDVGLDLDFSAFDASLSPFMIREAGRIMSELSGTPSHFGTALINTIIYSKHLLYNCCYHVCGSMPSGSPCTALLNSIINNINLYYVFSKIFGKSPVFFCQALRILCYGDDVLIVFSRDVQIDNLDLIGQKIVDEFKKLGMTATSADKNVPQLKPVSELTFLKRSFNLVEDRIRPAISEKTIWSLIAWQRSNAEFEQNLENAQWFAFMHGYEFYQKFYYFVQSCLEKEMIEYRLKSYDWWRMRFYDQCFICDLS.

2 consecutive short sequence motifs ((L)YPX(n)L motif) follow at residues 167–171 and 200–205; these read YPHGL and YPVWEL. The segment at 766-836 is involved in P1-2A pentamerization; sequence MMSRIAAGDL…PRKMKGLFSQ (71 aa). The helical transmembrane segment at 1011 to 1031 threads the bilayer; it reads TVEIINTVLCFVKSGILLYVI. Residues 1043–1070 are membrane-penetrating ability; it reads IGLLRVMNYADIGCSVISCGKVFSKMLE. Positions 1127-1152 form a coiled coil; it reads KKKDILNILKDNQQKIEKAIEEADNF. The SF3 helicase domain maps to 1204 to 1366; it reads HQKLKNLGSI…SFFKNPHNDM (163 aa). Residue 1230-1237 participates in ATP binding; sequence GKRGGGKS. A helical membrane pass occupies residues 1462 to 1482; the sequence is WVAVGAAVGILGVLVGGWFVY. Tyr-1499 bears the O-(5'-phospho-RNA)-tyrosine mark. Residues 1514 to 1728 form the Peptidase C3 domain; the sequence is DPVESQSTLE…VAKLVTQEMF (215 aa). Catalysis depends on for protease 3C activity residues His-1563, Asp-1603, and Cys-1691. The 122-residue stretch at 1976 to 2097 folds into the RdRp catalytic domain; sequence DVGLDLDFSA…VFSRDVQIDN (122 aa).

This sequence belongs to the picornaviridae polyprotein family. Homodimer. Homomultimer; probably interacts with membranes in a multimeric form. Seems to assemble into amyloid-like fibers. As to quaternary structure, homodimer. Monomer. Interacts with protein 3CD. In terms of assembly, interacts with host ACBD3. Interacts with protein 3AB. As to quaternary structure, interacts with human MAVS. In terms of assembly, homodimer; disulfide-linked. Homopentamer. Homooligomer. As to quaternary structure, interacts with capsid protein VP2. Interacts with capsid protein VP3. In terms of assembly, interacts with capsid protein VP1. Interacts with capsid protein VP3. Interacts with capsid protein VP1. Interacts with capsid protein VP2. In terms of processing, specific enzymatic cleavages by viral protease in vivo yield a variety of precursors and mature proteins. Polyprotein processing intermediates are produced, such as P1-2A which is a functional precursor of the structural proteins, VP0 which is a VP4-VP2 precursor, VP1-2A precursor, 3ABC precursor which is a stable and catalytically active precursor of 3A, 3B and 3C proteins, 3AB and 3CD precursors. The assembly signal 2A is removed from VP1-2A by a host protease, possibly host Cathepsin L. This cleavage occurs over a region of 3 amino-acids probably generating VP1 proteins with heterogeneous C-termini. During virion maturation, immature virions are rendered infectious following cleavage of VP0 into VP4 and VP2. This maturation seems to be an autocatalytic event triggered by the presence of RNA in the capsid and is followed by a conformational change of the particle. Post-translationally, the assembly signal 2A is removed from VP1-2A by a host protease, possibly host Cathepsin L in naked virions. This cleavage does not occur in enveloped virions. This cleavage occurs over a region of 3 amino-acids probably generating VP1 proteins with heterogeneous C-termini. In terms of processing, VPg is uridylylated prior to priming replication into VPg-pUpU. Unlike other picornaviruses, does not seem to be myristoylated.

The protein localises to the virion. Its subcellular location is the host endosome. The protein resides in the host multivesicular body. It is found in the host membrane. It localises to the host mitochondrion outer membrane. The protein localises to the host cytoplasm. Its subcellular location is the host cytoplasmic vesicle membrane. It carries out the reaction RNA(n) + a ribonucleoside 5'-triphosphate = RNA(n+1) + diphosphate. It catalyses the reaction a ribonucleoside 5'-triphosphate + H2O = a ribonucleoside 5'-diphosphate + phosphate + H(+). The catalysed reaction is Selective cleavage of Gln-|-Gly bond in the poliovirus polyprotein. In other picornavirus reactions Glu may be substituted for Gln, and Ser or Thr for Gly.. Functionally, capsid proteins VP1, VP2, and VP3 form a closed capsid enclosing the viral positive strand RNA genome. All these proteins contain a beta-sheet structure called beta-barrel jelly roll. Together they form an icosahedral capsid (T=3) composed of 60 copies of each VP1, VP2, and VP3, with a diameter of approximately 300 Angstroms. VP1 is situated at the 12 fivefold axes, whereas VP2 and VP3 are located at the quasi-sixfold axes. The naked capsid interacts with the host receptor HAVCR1 to provide virion attachment to and probably entry into the target cell. Its function is as follows. VP0 precursor is a component of the immature procapsids. Plays a role in the assembly of the 12 pentamers into an icosahedral structure. Has not been detected in mature virions, supposedly owing to its small size. In terms of biological role, precursor component of immature procapsids that corresponds to an extended form of the structural protein VP1. After maturation, possibly by the host Cathepsin L, the assembly signal 2A is cleaved to give rise to the mature VP1 protein. Functionally, functions as a viroporin. Affects membrane integrity and causes an increase in membrane permeability. Involved in host intracellular membrane rearrangements probably to give rise to the viral factories. Does not disrupt calcium homeostasis or glycoprotein trafficking. Antagonizes the innate immune response of the host by suppressing IFN-beta synthesis, which it achieves by interfering with the RIG-I/IFIH1 pathway. Its function is as follows. Affects membrane integrity and causes an increase in membrane permeability. Associates with and induces structural rearrangements of intracellular membranes. Displays RNA-binding activity. In terms of biological role, the precursor 3ABC is targeted to the mitochondrial membrane where protease 3C activity cleaves and inhibits the host antiviral protein MAVS, thereby disrupting activation of IRF3 through the IFIH1/MDA5 pathway. In vivo, the protease activity of 3ABC precursor is more efficient in cleaving the 2BC precursor than that of protein 3C. The 3ABC precursor may therefore play a role in the proteolytic processing of the polyprotein. Possible viroporin. Functionally, interacts with the 3CD precursor and with RNA structures found at both the 5'- and 3'-termini of the viral genome. Since the 3AB precursor contains the hydrophobic domain 3A, it probably anchors the whole viral replicase complex to intracellular membranes on which viral RNA synthesis occurs. Its function is as follows. May serve as membrane anchor to the 3AB and 3ABC precursors via its hydrophobic domain. May interact with RNA. Acts as a primer for viral RNA replication and remains covalently bound to viral genomic RNA. VPg is uridylylated prior to priming replication into VPg-pUpU. The VPg-pUpU is then used as primer on the genomic RNA poly(A) by the RNA-dependent RNA polymerase to replicate the viral genome. In terms of biological role, cysteine protease that generates mature viral proteins from the precursor polyprotein. In addition to its proteolytic activity, it binds to viral RNA, and thus influences viral genome replication. RNA and substrate bind cooperatively to the protease. Cleaves IKBKG/NEMO to impair innate immune signaling. Cleaves host PABPC1 which may participate in the switch of viral translation to RNA synthesis. Functionally, interacts with the 3AB precursor and with RNA structures found at both the 5'- and 3'-termini of the viral genome. Disrupts TLR3 signaling by degrading the host adapter protein TICAM1/TRIF. Its function is as follows. RNA-directed RNA polymerase 3D-POL replicates genomic and antigenomic RNA by recognizing replications specific signals. The polypeptide is Genome polyprotein (Human hepatitis A virus genotype IA (isolate H2) (HHAV)).